The following is a 302-amino-acid chain: Sulfate adenylyltransferase subunit 2 (302 aa).

This sequence belongs to the PAPS reductase family. CysD subfamily. In terms of assembly, heterodimer composed of CysD, the smaller subunit, and CysN.

It carries out the reaction sulfate + ATP + H(+) = adenosine 5'-phosphosulfate + diphosphate. Its pathway is sulfur metabolism; hydrogen sulfide biosynthesis; sulfite from sulfate: step 1/3. In terms of biological role, with CysN forms the ATP sulfurylase (ATPS) that catalyzes the adenylation of sulfate producing adenosine 5'-phosphosulfate (APS) and diphosphate, the first enzymatic step in sulfur assimilation pathway. APS synthesis involves the formation of a high-energy phosphoric-sulfuric acid anhydride bond driven by GTP hydrolysis by CysN coupled to ATP hydrolysis by CysD. The sequence is that of Sulfate adenylyltransferase subunit 2 from Salmonella paratyphi A (strain AKU_12601).